The chain runs to 214 residues: Cytochrome b (214 aa).

The next 4 membrane-spanning stretches (helical) occupy residues 31–51 (FGSMLLICLMLQTLTGFFLAI), 75–96 (WTMQNLHAISASLFFICIYIHI), 111–131 (WLSGVTLLFTLMATAFFGYVL), and 176–196 (FFALHFILPFIIISLSSAHIM). Residues His-81 and His-95 each coordinate heme b. Residues His-180 and His-194 each contribute to the heme b site. His-199 contributes to the a ubiquinone binding site.

Belongs to the cytochrome b family. The cytochrome bc1 complex contains 3 respiratory subunits (MT-CYB, CYC1 and UQCRFS1), 2 core proteins (UQCRC1 and UQCRC2) and probably 6 low-molecular weight proteins. It depends on heme b as a cofactor.

It is found in the mitochondrion inner membrane. Component of the ubiquinol-cytochrome c reductase complex (complex III or cytochrome b-c1 complex) that is part of the mitochondrial respiratory chain. The b-c1 complex mediates electron transfer from ubiquinol to cytochrome c. Contributes to the generation of a proton gradient across the mitochondrial membrane that is then used for ATP synthesis. This is Cytochrome b (MT-CYB) from Elapsoidea semiannulata (Angolan garter snake).